The following is a 927-amino-acid chain: MSSTVLSVEPDALPRSGEDAAAIAEDARLRDDIRLLGRILGDTVRDQEGEDVFDAVERIRQTSIRFHRDNDQPARDELVELFDGLSTPATLRIVRAFSYFSHLANLAEDQNNIRQMRLQNGARPGSLVATLAHARAVGISAKELRHFFETALVSPVLTAHPTEVRRKSTMDREMEIARLLDRRERLQMTPEEIEQHEELLRRAVLTLWQTNMLRRTKLTVLDEVANGLSFYDYAFLHEVPRLHGVLEDKLNDDDGAGEELASFLRMGSWIGGDRDGNPFVTAEVMRGTLRLQSRRALRHYLDELHALGSELSIAAHLADISDELRALAENSPDTSPHRAGEPYRLAVSAIYARLAATAHRLGIDDIRAPVAESAPYAEPAELKADLDVLHRSLVANNSAVIARGRLRSLRRAVDCFGFHLASLDMRQNSAVHERTMAELIDKAMPGKSYMAMNEEARIALLAAELRSPRPLASPFVKYSEETVDELAVFRAAAEAHATFGPAAIPQCIISMTKGVSDLLEVVVLLKEVGLVDPAGRSAINVVPLFETIEDLQAAAGIMDRLLGLHDYRRLVDSRGGVQEVMLGYSDSNKDGGFVTSGWELYKAEIELLKIFEHHGVRMRLFHGRGGSVGRGGGPSYDAILAQPAGAVNGQIRITEQGEIITSKYSNPEVGRNNLEVLAAATLEASLLQPRLGAPCVGYLKAMDEISALAFKAYRGLVYETEGFEDYFWSSTVITEIATLNIGSRPASRKKTHKIEDLRAIPWVFSWAQCRLMLPGWYGFGSAVEAWVKAHPEQGMAYLQELNREWPFFRTLLSNMDMVLSKSSIAIASRYAELVADEKLRAAIFGRIKREWHSSIAALLAIMGHQRLLQGNPRLERSIRHRFPYLDPLNHVQVELLKQHRDHAVDEQALRGIQITINGISAGLRNSG.

Active-site residues include H160 and K589.

It belongs to the PEPCase type 1 family. Mg(2+) is required as a cofactor.

The enzyme catalyses oxaloacetate + phosphate = phosphoenolpyruvate + hydrogencarbonate. Functionally, forms oxaloacetate, a four-carbon dicarboxylic acid source for the tricarboxylic acid cycle. The polypeptide is Phosphoenolpyruvate carboxylase (Rhodopseudomonas palustris (strain BisA53)).